The sequence spans 458 residues: Transcription termination factor Rho (458 aa).

Residues 1–23 are disordered; that stretch reads MNTTNKESTAELNNTESNNNYNN. The segment covering 10–23 has biased composition (low complexity); that stretch reads AELNNTESNNNYNN. The Rho RNA-BD domain maps to 78–153; sequence LIVGEGVLEV…LKVNRVNFED (76 aa). ATP contacts are provided by residues 201 to 206, 213 to 218, and Arg-244; these read GKGQRA and RTGKTV.

The protein belongs to the Rho family. Homohexamer. The homohexamer assembles into an open ring structure.

In terms of biological role, facilitates transcription termination by a mechanism that involves Rho binding to the nascent RNA, activation of Rho's RNA-dependent ATPase activity, and release of the mRNA from the DNA template. In Rickettsia conorii (strain ATCC VR-613 / Malish 7), this protein is Transcription termination factor Rho.